Consider the following 156-residue polypeptide: D-aminoacyl-tRNA deacylase (156 aa).

Residues 142 to 143 (GP) carry the Gly-cisPro motif, important for rejection of L-amino acids motif.

It belongs to the DTD family. As to quaternary structure, homodimer.

The protein resides in the cytoplasm. The enzyme catalyses glycyl-tRNA(Ala) + H2O = tRNA(Ala) + glycine + H(+). It carries out the reaction a D-aminoacyl-tRNA + H2O = a tRNA + a D-alpha-amino acid + H(+). An aminoacyl-tRNA editing enzyme that deacylates mischarged D-aminoacyl-tRNAs. Also deacylates mischarged glycyl-tRNA(Ala), protecting cells against glycine mischarging by AlaRS. Acts via tRNA-based rather than protein-based catalysis; rejects L-amino acids rather than detecting D-amino acids in the active site. By recycling D-aminoacyl-tRNA to D-amino acids and free tRNA molecules, this enzyme counteracts the toxicity associated with the formation of D-aminoacyl-tRNA entities in vivo and helps enforce protein L-homochirality. The sequence is that of D-aminoacyl-tRNA deacylase from Cupriavidus pinatubonensis (strain JMP 134 / LMG 1197) (Cupriavidus necator (strain JMP 134)).